A 365-amino-acid polypeptide reads, in one-letter code: Carbamoyl phosphate synthase small chain (365 aa).

2 CPSase regions span residues 1–166 and 1–169; these read MKRQ…PSPG and MKRQ…GRGH. Serine 45, glycine 218, and glycine 220 together coordinate L-glutamine. A Glutamine amidotransferase type-1 domain is found at 170-357; it reads RVVLVDFGMK…LTMIENFKKE (188 aa). Catalysis depends on cysteine 245, which acts as the Nucleophile. The L-glutamine site is built by leucine 246, glutamine 249, asparagine 287, glycine 289, and tyrosine 290. Active-site residues include histidine 330 and glutamate 332.

The protein belongs to the CarA family. In terms of assembly, composed of two chains; the small (or glutamine) chain promotes the hydrolysis of glutamine to ammonia, which is used by the large (or ammonia) chain to synthesize carbamoyl phosphate. Tetramer of heterodimers (alpha,beta)4.

The catalysed reaction is hydrogencarbonate + L-glutamine + 2 ATP + H2O = carbamoyl phosphate + L-glutamate + 2 ADP + phosphate + 2 H(+). It catalyses the reaction L-glutamine + H2O = L-glutamate + NH4(+). It participates in amino-acid biosynthesis; L-arginine biosynthesis; carbamoyl phosphate from bicarbonate: step 1/1. Its pathway is pyrimidine metabolism; UMP biosynthesis via de novo pathway; (S)-dihydroorotate from bicarbonate: step 1/3. In terms of biological role, small subunit of the glutamine-dependent carbamoyl phosphate synthetase (CPSase). CPSase catalyzes the formation of carbamoyl phosphate from the ammonia moiety of glutamine, carbonate, and phosphate donated by ATP, constituting the first step of 2 biosynthetic pathways, one leading to arginine and/or urea and the other to pyrimidine nucleotides. The small subunit (glutamine amidotransferase) binds and cleaves glutamine to supply the large subunit with the substrate ammonia. This is Carbamoyl phosphate synthase small chain from Bacillus cereus (strain ATCC 10987 / NRS 248).